Here is a 741-residue protein sequence, read N- to C-terminus: Catalase-peroxidase (741 aa).

Positions 1 to 23 (MLKKIITALGMSGMLLASSNAIA) are cleaved as a signal peptide. A cross-link (tryptophyl-tyrosyl-methioninium (Trp-Tyr) (with M-249)) is located at residues 102–223 (WHDAGTYRIY…YAATQMGLIY (122 aa)). H103 acts as the Proton acceptor in catalysis. Residues 223–249 (YVNPEGPDGKPDIKGAASEIRQAFRAM) constitute a cross-link (tryptophyl-tyrosyl-methioninium (Tyr-Met) (with W-102)). Residue H264 participates in heme b binding.

The protein belongs to the peroxidase family. Peroxidase/catalase subfamily. In terms of assembly, homodimer or homotetramer. Heme b is required as a cofactor. In terms of processing, formation of the three residue Trp-Tyr-Met cross-link is important for the catalase, but not the peroxidase activity of the enzyme.

It catalyses the reaction H2O2 + AH2 = A + 2 H2O. It carries out the reaction 2 H2O2 = O2 + 2 H2O. Its function is as follows. Bifunctional enzyme with both catalase and broad-spectrum peroxidase activity. The sequence is that of Catalase-peroxidase from Francisella tularensis subsp. holarctica (strain FTNF002-00 / FTA).